We begin with the raw amino-acid sequence, 326 residues long: Beta-ketoacyl-[acyl-carrier-protein] synthase III (326 aa).

Active-site residues include Cys-120 and His-253. Residues 254-258 (QANIR) form an ACP-binding region. Residue Asn-283 is part of the active site.

Belongs to the thiolase-like superfamily. FabH family. As to quaternary structure, homodimer.

It localises to the cytoplasm. The catalysed reaction is malonyl-[ACP] + acetyl-CoA + H(+) = 3-oxobutanoyl-[ACP] + CO2 + CoA. Its pathway is lipid metabolism; fatty acid biosynthesis. In terms of biological role, catalyzes the condensation reaction of fatty acid synthesis by the addition to an acyl acceptor of two carbons from malonyl-ACP. Catalyzes the first condensation reaction which initiates fatty acid synthesis and may therefore play a role in governing the total rate of fatty acid production. Possesses both acetoacetyl-ACP synthase and acetyl transacylase activities. Its substrate specificity determines the biosynthesis of branched-chain and/or straight-chain of fatty acids. The chain is Beta-ketoacyl-[acyl-carrier-protein] synthase III from Ralstonia nicotianae (strain ATCC BAA-1114 / GMI1000) (Ralstonia solanacearum).